The following is a 76-amino-acid chain: DNA-directed RNA polymerase subunit epsilon (76 aa).

It belongs to the RNA polymerase subunit epsilon family. RNAP is composed of a core of 2 alpha, a beta and a beta' subunit. The core is associated with a delta subunit, and at least one of epsilon or omega. When a sigma factor is associated with the core the holoenzyme is formed, which can initiate transcription.

It carries out the reaction RNA(n) + a ribonucleoside 5'-triphosphate = RNA(n+1) + diphosphate. Functionally, a non-essential component of RNA polymerase (RNAP). The protein is DNA-directed RNA polymerase subunit epsilon of Streptococcus thermophilus (strain CNRZ 1066).